The following is a 344-amino-acid chain: Outer membrane protein A (344 aa).

Over 1 to 14 (MKAIFVLNAAPKDN) the chain is Periplasmic. Residues 15–24 (TWYAGGKLGW) form a beta stranded membrane-spanning segment. Residues 25 to 49 (SQYHDTGFYGNGFQNNNGPTRNDQL) lie on the Extracellular side of the membrane. Residues 50-59 (GAGAFGGYQV) form a beta stranded membrane-spanning segment. Residues 60 to 62 (NPY) lie on the Periplasmic side of the membrane. A beta stranded membrane pass occupies residues 63–71 (LGFEMGYDW). Residues 72 to 89 (LGRMAYKGSVDNGAFKAQ) lie on the Extracellular side of the membrane. The chain crosses the membrane as a beta stranded span at residues 90 to 100 (GVQLTAKLGYP). Residues 101-104 (ITDD) are Periplasmic-facing. The beta stranded transmembrane segment at 105-114 (LDIYTRLGGM) threads the bilayer. At 115-139 (VWRADSKGNYASTGVSRSEHDTGVS) the chain is on the extracellular side. Residues 140-149 (PVFAGGVEWA) form a beta stranded membrane-spanning segment. The Periplasmic portion of the chain corresponds to 150 to 153 (VTRD). A beta stranded transmembrane segment spans residues 154–162 (IATRLEYQW). At 163 to 179 (VNNIGDAGTVGTRPDNG) the chain is on the extracellular side. The chain crosses the membrane as a beta stranded span at residues 180–188 (MLSLGVSYR). The Periplasmic portion of the chain corresponds to 189–344 (FGQEDAAPVV…YKEVVTQPQA (156 aa)). 4 tandem repeats follow at residues 199–200 (AP), 201–202 (AP), 203–204 (AP), and 205–206 (AP). The interval 199-206 (APAPAPAP) is 4 X 2 AA tandem repeats of A-P. The region spanning 208 to 336 (VATKHFTLKS…RVEIEVKGYK (129 aa)) is the OmpA-like domain. C309 and C321 are oxidised to a cystine.

This sequence belongs to the outer membrane OOP (TC 1.B.6) superfamily. OmpA family. In terms of assembly, monomer and homodimer.

The protein resides in the cell outer membrane. Functionally, with TolR probably plays a role in maintaining the position of the peptidoglycan cell wall in the periplasm. Acts as a porin with low permeability that allows slow penetration of small solutes; an internal gate slows down solute passage. In terms of biological role, required for conjugation with F-type plasmids; probably serves as the mating receptor on recipient cells. This is Outer membrane protein A from Klebsiella pneumoniae.